We begin with the raw amino-acid sequence, 533 residues long: WD repeat-containing protein JIP5 (533 aa).

WD repeat units lie at residues 26–67 (NYSD…EKQS), 84–130 (GKVS…GSCR), 176–215 (NSNDSITKLCHSATNSCLLAGTENGHVLVYDSKNLGGSKL), 264–309 (NQDD…FMDQ), and 372–409 (GAADEVGLLEIDYDYRLISAGMESLKIWSNEQNEEIAL). 2 stretches are compositionally biased toward acidic residues: residues 408–428 (ALDESDDSDDESDSDNSEDDL) and 437–452 (ASDEEIEENKEEEDEK). Residues 408 to 533 (ALDESDDSDD…EHGIRRFDDL (126 aa)) are disordered. Basic and acidic residues-rich tracts occupy residues 453-463 (EDKPVKIDHPL) and 521-533 (QKHEHGIRRFDDL).

This sequence belongs to the WD repeat WDR55 family.

The protein resides in the nucleus. It localises to the nucleolus. The protein is WD repeat-containing protein JIP5 (JIP5) of Scheffersomyces stipitis (strain ATCC 58785 / CBS 6054 / NBRC 10063 / NRRL Y-11545) (Yeast).